The following is a 402-amino-acid chain: Mannonate dehydratase (402 aa).

Belongs to the mannonate dehydratase family. Fe(2+) is required as a cofactor. It depends on Mn(2+) as a cofactor.

It carries out the reaction D-mannonate = 2-dehydro-3-deoxy-D-gluconate + H2O. It participates in carbohydrate metabolism; pentose and glucuronate interconversion. Functionally, catalyzes the dehydration of D-mannonate. This chain is Mannonate dehydratase, found in Rhizobium meliloti (strain 1021) (Ensifer meliloti).